The chain runs to 497 residues: MRFLISSLLSGLALLTSLHAFVLALPREYTIAMSNPFHESLFSCPAASWPRVKLGSENTPQEPSKDLRKILSQISPKRIEATIRKLVSFGTRHTLSTQTNATYGIGAARDWIESEFQRYANASDGRLTVKVVGYDQQPDGNRIPFPVRISDVVATLKGEGDPERVYVVSGHYDSRNSDPLDYKGIAPGANDDASGVAVSLELARVMSQRDLPRPKATIVFAAVAGEEQGLYGANFLAQSFRNSSTNVEGMFTNDIIGSSTADDGTKEPHVIRLFAQGIPPLNVENQAMRERRIMIGGDNDTPARQLARFVKETAENKHTDMEVSVIYRLDRYLRGGDHRPFLEAGYPAARFTEPNENYAHQHQDIRIDKDPKTGKDIQYGDLPEFCDFDFISRVGKVNAAALWNLAMSPGMPRNVRVNTNALSNDSKFSWDPPAGGNALVGGYEIVWRSTTAPFWTHKMDVGMVQEATIDLSKDNVIFGIRARGKNGERGVAVLPFP.

A signal peptide spans 1-24 (MRFLISSLLSGLALLTSLHAFVLA). N-linked (GlcNAc...) asparagine glycans are attached at residues asparagine 100 and asparagine 121. Zn(2+) contacts are provided by histidine 171, aspartate 191, and glutamate 227. An N-linked (GlcNAc...) asparagine glycan is attached at asparagine 242. Residue aspartate 254 participates in Zn(2+) binding. The Fibronectin type-III domain occupies 411-497 (MPRNVRVNTN…ERGVAVLPFP (87 aa)). Asparagine 424 carries N-linked (GlcNAc...) asparagine glycosylation.

The protein belongs to the peptidase M28 family. M28B subfamily. The cofactor is Zn(2+).

The protein resides in the secreted. The chain is Probable zinc metalloprotease TRV_03476 from Trichophyton verrucosum (strain HKI 0517).